Reading from the N-terminus, the 329-residue chain is Protein mlo2 (329 aa).

A UBR-type zinc finger spans residues 33–104 (DTCTYSMGYL…HSIPCNLRKS (72 aa)). The segment at 120 to 179 (GRFCICDTVYNPETEEGTMFQCILCEDWFHEKCLQKTNKGIAIPDAETFEWLVCSECSEK) adopts a PHD-type zinc-finger fold.

Belongs to the UBR7 family.

Its function is as follows. Not known, interfere with mitotic chromosome segregation when overexpressed. The chain is Protein mlo2 (mlo2) from Schizosaccharomyces pombe (strain 972 / ATCC 24843) (Fission yeast).